Reading from the N-terminus, the 332-residue chain is Heptahelical transmembrane protein 1 (332 aa).

The interval 1 to 52 (MDQNGHNDEAETVSCGNGNCKSKIVPGDDHGGDESSGTKRRKKRKTQQKTMK) is disordered. The Cytoplasmic portion of the chain corresponds to 1 to 98 (MDQNGHNDEA…VFSFHNESLN (98 aa)). Residues 26-37 (PGDDHGGDESSG) are compositionally biased toward basic and acidic residues. The segment covering 38-52 (TKRRKKRKTQQKTMK) has biased composition (basic residues). The helical transmembrane segment at 99 to 119 (VWTHLIGFIFFVALTVANIIH) threads the bilayer. Topologically, residues 120-138 (HDGFFPVDAKSPGNVTRWP) are extracellular. The helical transmembrane segment at 139-159 (FFVFLGGSMFCLLASSICHLF) threads the bilayer. Topologically, residues 160 to 172 (CCHSKELNVFLLR) are cytoplasmic. A helical transmembrane segment spans residues 173–193 (IDYAGITAMIITSFFPPIFYI). The Extracellular portion of the chain corresponds to 194-199 (FQCTPR). The chain crosses the membrane as a helical span at residues 200-220 (WYFIYLAGITSMGIFTIITLF). Over 221-233 (TPSLSAPKYRAFR) the chain is Cytoplasmic. The chain crosses the membrane as a helical span at residues 234–254 (ALLFASMGLFGIVPAAHALVV). The Extracellular portion of the chain corresponds to 255 to 262 (NWGNPQRN). The helical transmembrane segment at 263-283 (VTLVYELLMAVFYLVGTGFYV) threads the bilayer. At 284-303 (GRVPERLKPGWFDRVGHSHQ) the chain is on the cytoplasmic side. A helical membrane pass occupies residues 304 to 324 (IFHVFVLLGALSHYAAALLFL). Residues 325 to 332 (DWRDHVGC) lie on the Extracellular side of the membrane.

Belongs to the ADIPOR family. In terms of assembly, interacts (via N-terminus) with SCRM/ICE1. Expressed in roots, hypocotyls, vasculature of cotyledons and leaves, hydathodes and guard cells. In reproductive organs, expressed in trichomes, veins of sepals, stamens and stigmata of pistils.

Its subcellular location is the membrane. May act as a negative regulator of abscisic acid (ABA)-mediated osmotic stress signaling and function in cross-talk between cold and osmotic signaling. The sequence is that of Heptahelical transmembrane protein 1 (HHP1) from Arabidopsis thaliana (Mouse-ear cress).